Consider the following 361-residue polypeptide: MLRLKNDRFIRALLRQPVDRTPVWIMRQAGRYLPEYRQLREKVPNFMAFCKTPELACEATLQPLRRFPLDAAIIFSDILTIPDAMGVDLHIAPTVGPVIRNPVRSAQDVNRLQMPAVEEALSYLFDAIRLTVKALDHRVPLIGFAGSPWTLACYMTEGQSSKTFLTARAMLYQQPDVFHTLLQKLTTLTIAYLNAQIKAGADVVMLFDTWGGLLTPSLYRQFSLDYLSQIAAEVVRQKNGRKIPLIFFTKNGGQWLESIANSGCDAVGLDWTTDIGQARRRVGDRVALQGNLDPAILLSNPESISTAAVDILKSYGQGSGHVFNLGHGIDPSTPIENVAALVEAVQNFSIKNEKPISSYYR.

Residues 27–31 (RQAGR), aspartate 77, tyrosine 154, threonine 209, and histidine 327 contribute to the substrate site.

This sequence belongs to the uroporphyrinogen decarboxylase family. In terms of assembly, homodimer.

It localises to the cytoplasm. It carries out the reaction uroporphyrinogen III + 4 H(+) = coproporphyrinogen III + 4 CO2. It participates in porphyrin-containing compound metabolism; protoporphyrin-IX biosynthesis; coproporphyrinogen-III from 5-aminolevulinate: step 4/4. Catalyzes the decarboxylation of four acetate groups of uroporphyrinogen-III to yield coproporphyrinogen-III. The sequence is that of Uroporphyrinogen decarboxylase from Coxiella burnetii (strain RSA 331 / Henzerling II).